Here is a 643-residue protein sequence, read N- to C-terminus: 1-deoxy-D-xylulose-5-phosphate synthase (643 aa).

Thiamine diphosphate contacts are provided by residues histidine 78 and 119–121 (AHS). Aspartate 150 is a Mg(2+) binding site. Thiamine diphosphate contacts are provided by residues 151–152 (GS), asparagine 179, tyrosine 288, and glutamate 370. Residue asparagine 179 participates in Mg(2+) binding.

This sequence belongs to the transketolase family. DXPS subfamily. Homodimer. The cofactor is Mg(2+). Requires thiamine diphosphate as cofactor.

It carries out the reaction D-glyceraldehyde 3-phosphate + pyruvate + H(+) = 1-deoxy-D-xylulose 5-phosphate + CO2. It functions in the pathway metabolic intermediate biosynthesis; 1-deoxy-D-xylulose 5-phosphate biosynthesis; 1-deoxy-D-xylulose 5-phosphate from D-glyceraldehyde 3-phosphate and pyruvate: step 1/1. In terms of biological role, catalyzes the acyloin condensation reaction between C atoms 2 and 3 of pyruvate and glyceraldehyde 3-phosphate to yield 1-deoxy-D-xylulose-5-phosphate (DXP). The sequence is that of 1-deoxy-D-xylulose-5-phosphate synthase from Brucella melitensis biotype 2 (strain ATCC 23457).